A 122-amino-acid polypeptide reads, in one-letter code: Large ribosomal subunit protein uL14 (122 aa).

Belongs to the universal ribosomal protein uL14 family. Part of the 50S ribosomal subunit. Forms a cluster with proteins L3 and L19. In the 70S ribosome, L14 and L19 interact and together make contacts with the 16S rRNA in bridges B5 and B8.

Functionally, binds to 23S rRNA. Forms part of two intersubunit bridges in the 70S ribosome. The sequence is that of Large ribosomal subunit protein uL14 from Methylibium petroleiphilum (strain ATCC BAA-1232 / LMG 22953 / PM1).